Here is a 161-residue protein sequence, read N- to C-terminus: 2-C-methyl-D-erythritol 2,4-cyclodiphosphate synthase (161 aa).

D14 and H16 together coordinate a divalent metal cation. Residues 14–16 (DVH) and 40–41 (HS) each bind 4-CDP-2-C-methyl-D-erythritol 2-phosphate. H48 is an a divalent metal cation binding site. 4-CDP-2-C-methyl-D-erythritol 2-phosphate is bound by residues 62-64 (DLG), F142, and R145.

Belongs to the IspF family. As to quaternary structure, homotrimer. A divalent metal cation is required as a cofactor.

It carries out the reaction 4-CDP-2-C-methyl-D-erythritol 2-phosphate = 2-C-methyl-D-erythritol 2,4-cyclic diphosphate + CMP. The protein operates within isoprenoid biosynthesis; isopentenyl diphosphate biosynthesis via DXP pathway; isopentenyl diphosphate from 1-deoxy-D-xylulose 5-phosphate: step 4/6. Its function is as follows. Involved in the biosynthesis of isopentenyl diphosphate (IPP) and dimethylallyl diphosphate (DMAPP), two major building blocks of isoprenoid compounds. Catalyzes the conversion of 4-diphosphocytidyl-2-C-methyl-D-erythritol 2-phosphate (CDP-ME2P) to 2-C-methyl-D-erythritol 2,4-cyclodiphosphate (ME-CPP) with a corresponding release of cytidine 5-monophosphate (CMP). The sequence is that of 2-C-methyl-D-erythritol 2,4-cyclodiphosphate synthase from Acidothermus cellulolyticus (strain ATCC 43068 / DSM 8971 / 11B).